Here is a 361-residue protein sequence, read N- to C-terminus: Peptide chain release factor 1 (361 aa).

An N5-methylglutamine modification is found at Q235. Residues 284–306 (SQQATAEAMTRKLQVGSGDRSQR) are disordered.

Belongs to the prokaryotic/mitochondrial release factor family. Methylated by PrmC. Methylation increases the termination efficiency of RF1.

It localises to the cytoplasm. Peptide chain release factor 1 directs the termination of translation in response to the peptide chain termination codons UAG and UAA. This is Peptide chain release factor 1 from Xylella fastidiosa (strain 9a5c).